The primary structure comprises 1076 residues: Isoleucine--tRNA ligase (1076 aa).

Positions 47–57 match the 'HIGH' region motif; that stretch reads PYTTGQIHLGT. Positions 591–595 match the 'KMSKS' region motif; the sequence is KMSKS. Lys594 is an ATP binding site.

It belongs to the class-I aminoacyl-tRNA synthetase family. IleS type 2 subfamily. Monomer. The cofactor is Zn(2+).

The protein resides in the cytoplasm. It catalyses the reaction tRNA(Ile) + L-isoleucine + ATP = L-isoleucyl-tRNA(Ile) + AMP + diphosphate. Catalyzes the attachment of isoleucine to tRNA(Ile). As IleRS can inadvertently accommodate and process structurally similar amino acids such as valine, to avoid such errors it has two additional distinct tRNA(Ile)-dependent editing activities. One activity is designated as 'pretransfer' editing and involves the hydrolysis of activated Val-AMP. The other activity is designated 'posttransfer' editing and involves deacylation of mischarged Val-tRNA(Ile). The polypeptide is Isoleucine--tRNA ligase (Methanoregula boonei (strain DSM 21154 / JCM 14090 / 6A8)).